Here is a 358-residue protein sequence, read N- to C-terminus: Carbamoyl phosphate synthase small chain (358 aa).

The tract at residues 1–172 (MKAALALEDG…EAKRFESDGD (172 aa)) is CPSase. 3 residues coordinate L-glutamine: serine 45, glycine 222, and glycine 224. The region spanning 174–358 (EVVLVDCGVK…RYVDMLREYR (185 aa)) is the Glutamine amidotransferase type-1 domain. Cysteine 249 functions as the Nucleophile in the catalytic mechanism. L-glutamine-binding residues include leucine 250, glutamine 253, asparagine 291, and phenylalanine 294. Active-site residues include histidine 333 and glutamate 335.

The protein belongs to the CarA family. In terms of assembly, composed of two chains; the small (or glutamine) chain promotes the hydrolysis of glutamine to ammonia, which is used by the large (or ammonia) chain to synthesize carbamoyl phosphate. Tetramer of heterodimers (alpha,beta)4.

It carries out the reaction hydrogencarbonate + L-glutamine + 2 ATP + H2O = carbamoyl phosphate + L-glutamate + 2 ADP + phosphate + 2 H(+). The enzyme catalyses L-glutamine + H2O = L-glutamate + NH4(+). The protein operates within amino-acid biosynthesis; L-arginine biosynthesis; carbamoyl phosphate from bicarbonate: step 1/1. It functions in the pathway pyrimidine metabolism; UMP biosynthesis via de novo pathway; (S)-dihydroorotate from bicarbonate: step 1/3. Functionally, small subunit of the glutamine-dependent carbamoyl phosphate synthetase (CPSase). CPSase catalyzes the formation of carbamoyl phosphate from the ammonia moiety of glutamine, carbonate, and phosphate donated by ATP, constituting the first step of 2 biosynthetic pathways, one leading to arginine and/or urea and the other to pyrimidine nucleotides. The small subunit (glutamine amidotransferase) binds and cleaves glutamine to supply the large subunit with the substrate ammonia. The sequence is that of Carbamoyl phosphate synthase small chain from Archaeoglobus fulgidus (strain ATCC 49558 / DSM 4304 / JCM 9628 / NBRC 100126 / VC-16).